Here is a 207-residue protein sequence, read N- to C-terminus: Protein FAM177A1 (207 aa).

M1 is subject to N-acetylmethionine. At S65 the chain carries Phosphoserine. T66 carries the post-translational modification Phosphothreonine. Residues 131–170 (IDEYYRMKKEEEEEEEENRMSEEAERQYQQNKLQADSIVQ) are a coiled coil. The disordered stretch occupies residues 142–176 (EEEEEENRMSEEAERQYQQNKLQADSIVQTDQPET). Residues 157-176 (QYQQNKLQADSIVQTDQPET) show a composition bias toward polar residues.

This sequence belongs to the FAM177 family.

The protein is Protein FAM177A1 (Fam177a1) of Mus musculus (Mouse).